The following is a 120-amino-acid chain: Large ribosomal subunit protein bL19 (120 aa).

Belongs to the bacterial ribosomal protein bL19 family.

Functionally, this protein is located at the 30S-50S ribosomal subunit interface and may play a role in the structure and function of the aminoacyl-tRNA binding site. The chain is Large ribosomal subunit protein bL19 from Gloeothece citriformis (strain PCC 7424) (Cyanothece sp. (strain PCC 7424)).